Reading from the N-terminus, the 367-residue chain is tRNA-specific 2-thiouridylase MnmA 2 (367 aa).

ATP is bound by residues 10–17 (GMSGGVDS) and methionine 36. The segment at 96–98 (NPD) is interaction with target base in tRNA. The active-site Nucleophile is cysteine 101. The cysteines at positions 101 and 197 are disulfide-linked. Residue glycine 125 participates in ATP binding. Positions 147–149 (KDQ) are interaction with tRNA. Cysteine 197 functions as the Cysteine persulfide intermediate in the catalytic mechanism. Residues 314–315 (RY) are interaction with tRNA.

It belongs to the MnmA/TRMU family.

The protein localises to the cytoplasm. The enzyme catalyses S-sulfanyl-L-cysteinyl-[protein] + uridine(34) in tRNA + AH2 + ATP = 2-thiouridine(34) in tRNA + L-cysteinyl-[protein] + A + AMP + diphosphate + H(+). In terms of biological role, catalyzes the 2-thiolation of uridine at the wobble position (U34) of tRNA, leading to the formation of s(2)U34. The polypeptide is tRNA-specific 2-thiouridylase MnmA 2 (Aliarcobacter butzleri (strain RM4018) (Arcobacter butzleri)).